Reading from the N-terminus, the 103-residue chain is Salivary thrombin inhibitor anophelin (103 aa).

The N-terminal stretch at 1–21 (MASKLFVLAFLCLALVVVVQS) is a signal peptide. Residues 24-103 (QYARGDVPTY…PAASSSESDE (80 aa)) form a disordered region. Residues 56–68 (EEFDPSLLEEHAD) are blocks exosite I of host thrombin. Residues 74–77 (DPGR) are blocks active site cleft of host thrombin in a reverse direction compared to substrates. Residues 91 to 103 (ASAPAASSSESDE) show a composition bias toward low complexity.

This sequence belongs to the anophelin family. In terms of assembly, interacts with human F2 (thrombin); the interaction results in thrombin inhibition. Female salivary gland (at protein level). Not detected in female midgut, head, carcass and male tissues (at protein level).

It is found in the secreted. Its activity is regulated as follows. Increasing concentration of NaCl decreases affinity for thrombin. In terms of biological role, salivary protein with anticoagulant activity that inhibits host thrombin (F2); binds to the proteinase in a reverse orientation (opposite to substrates). This is Salivary thrombin inhibitor anophelin from Anopheles gambiae (African malaria mosquito).